The sequence spans 368 residues: MNERIFRENTRPVQVGNLTIGGSEELTIQSMTTTKTHDVEATVAEIHRLEEVGCQIVRVACPDERAANALSAIKKRIHIPLVADIHFDYRLALKAIDAGVDKIRINPGNIGRRDRVEKVVNAAKAKNIPIRIGVNAGSLEKKIIQKYGYPTAEGMVESALAHIKILEDLDFYDIIVSLKASDVNLAIEAYDKASRAFNYPLHLGITESGTQFAGGIKSAAGLGAILSLGIGNTLRVSLSADPVEEIKVAREVLKSFGLSSNAAMLISCPTCGRIEIDLIRIANEVENYIATIKAPIKVAVLGCAVNGPGEAREADIGIAGSNGEGLLFRHGKIIRKVPEAIMVEELKKEIDILAEEYFEKKTDLESLR.

Residues cysteine 268, cysteine 271, cysteine 303, and glutamate 310 each contribute to the [4Fe-4S] cluster site.

This sequence belongs to the IspG family. The cofactor is [4Fe-4S] cluster.

It carries out the reaction (2E)-4-hydroxy-3-methylbut-2-enyl diphosphate + oxidized [flavodoxin] + H2O + 2 H(+) = 2-C-methyl-D-erythritol 2,4-cyclic diphosphate + reduced [flavodoxin]. Its pathway is isoprenoid biosynthesis; isopentenyl diphosphate biosynthesis via DXP pathway; isopentenyl diphosphate from 1-deoxy-D-xylulose 5-phosphate: step 5/6. In terms of biological role, converts 2C-methyl-D-erythritol 2,4-cyclodiphosphate (ME-2,4cPP) into 1-hydroxy-2-methyl-2-(E)-butenyl 4-diphosphate. This is 4-hydroxy-3-methylbut-2-en-1-yl diphosphate synthase (flavodoxin) from Listeria monocytogenes serotype 4b (strain F2365).